Here is a 375-residue protein sequence, read N- to C-terminus: Succinyl-diaminopimelate desuccinylase (375 aa).

A Zn(2+)-binding site is contributed by His66. Asp68 is an active-site residue. Residue Asp99 coordinates Zn(2+). Catalysis depends on Glu133, which acts as the Proton acceptor. 3 residues coordinate Zn(2+): Glu134, Glu162, and His348.

This sequence belongs to the peptidase M20A family. DapE subfamily. Homodimer. The cofactor is Zn(2+). Co(2+) serves as cofactor.

The enzyme catalyses N-succinyl-(2S,6S)-2,6-diaminopimelate + H2O = (2S,6S)-2,6-diaminopimelate + succinate. It participates in amino-acid biosynthesis; L-lysine biosynthesis via DAP pathway; LL-2,6-diaminopimelate from (S)-tetrahydrodipicolinate (succinylase route): step 3/3. Functionally, catalyzes the hydrolysis of N-succinyl-L,L-diaminopimelic acid (SDAP), forming succinate and LL-2,6-diaminopimelate (DAP), an intermediate involved in the bacterial biosynthesis of lysine and meso-diaminopimelic acid, an essential component of bacterial cell walls. This is Succinyl-diaminopimelate desuccinylase from Escherichia coli O139:H28 (strain E24377A / ETEC).